Consider the following 291-residue polypeptide: Lipoyl synthase (291 aa).

7 residues coordinate [4Fe-4S] cluster: Cys-36, Cys-41, Cys-47, Cys-62, Cys-66, Cys-69, and Ser-275. The region spanning 48–264 is the Radical SAM core domain; sequence FSKKTATFLI…KEFAISIGFK (217 aa).

Belongs to the radical SAM superfamily. Lipoyl synthase family. [4Fe-4S] cluster serves as cofactor.

The protein resides in the cytoplasm. The catalysed reaction is [[Fe-S] cluster scaffold protein carrying a second [4Fe-4S](2+) cluster] + N(6)-octanoyl-L-lysyl-[protein] + 2 oxidized [2Fe-2S]-[ferredoxin] + 2 S-adenosyl-L-methionine + 4 H(+) = [[Fe-S] cluster scaffold protein] + N(6)-[(R)-dihydrolipoyl]-L-lysyl-[protein] + 4 Fe(3+) + 2 hydrogen sulfide + 2 5'-deoxyadenosine + 2 L-methionine + 2 reduced [2Fe-2S]-[ferredoxin]. It participates in protein modification; protein lipoylation via endogenous pathway; protein N(6)-(lipoyl)lysine from octanoyl-[acyl-carrier-protein]: step 2/2. In terms of biological role, catalyzes the radical-mediated insertion of two sulfur atoms into the C-6 and C-8 positions of the octanoyl moiety bound to the lipoyl domains of lipoate-dependent enzymes, thereby converting the octanoylated domains into lipoylated derivatives. The sequence is that of Lipoyl synthase from Caldicellulosiruptor bescii (strain ATCC BAA-1888 / DSM 6725 / KCTC 15123 / Z-1320) (Anaerocellum thermophilum).